The sequence spans 438 residues: 3-phosphoshikimate 1-carboxyvinyltransferase (438 aa).

Residues Lys28, Ser29, and Arg33 each contribute to the 3-phosphoshikimate site. Lys28 is a phosphoenolpyruvate binding site. Gly97 and Arg125 together coordinate phosphoenolpyruvate. 3-phosphoshikimate contacts are provided by Ser168, Ser169, Gln170, Glu316, and His343. Gln170 is a phosphoenolpyruvate binding site. Glu316 acts as the Proton acceptor in catalysis. 3 residues coordinate phosphoenolpyruvate: Arg347, Arg388, and Lys413.

This sequence belongs to the EPSP synthase family. As to quaternary structure, monomer.

Its subcellular location is the cytoplasm. The catalysed reaction is 3-phosphoshikimate + phosphoenolpyruvate = 5-O-(1-carboxyvinyl)-3-phosphoshikimate + phosphate. The protein operates within metabolic intermediate biosynthesis; chorismate biosynthesis; chorismate from D-erythrose 4-phosphate and phosphoenolpyruvate: step 6/7. Functionally, catalyzes the transfer of the enolpyruvyl moiety of phosphoenolpyruvate (PEP) to the 5-hydroxyl of shikimate-3-phosphate (S3P) to produce enolpyruvyl shikimate-3-phosphate and inorganic phosphate. The protein is 3-phosphoshikimate 1-carboxyvinyltransferase of Rhodococcus jostii (strain RHA1).